The sequence spans 207 residues: MKLSEKFCVFLFFLLFTSTTHATGIGSLKSFMENARTVRADFAQTVLDKSRHIVQTASGAMQFERPGKFRWIYEKPYEQLIVGDGERIWFYDHDLAQVTVRKLDAAIGSSPAALLAGNNDIEKNFHLLEIGLQGNIEWVEATPKTRESTFERVLLGFTLEGILRVMELHDNFGQVTVFEFSGVEQNRKLPPELFKFSPPAGVDVISE.

An N-terminal signal peptide occupies residues 1-22 (MKLSEKFCVFLFFLLFTSTTHA).

It belongs to the LolA family. As to quaternary structure, monomer.

The protein localises to the periplasm. In terms of biological role, participates in the translocation of lipoproteins from the inner membrane to the outer membrane. Only forms a complex with a lipoprotein if the residue after the N-terminal Cys is not an aspartate (The Asp acts as a targeting signal to indicate that the lipoprotein should stay in the inner membrane). The polypeptide is Outer-membrane lipoprotein carrier protein (Nitrosospira multiformis (strain ATCC 25196 / NCIMB 11849 / C 71)).